The sequence spans 129 residues: Large ribosomal subunit protein eL32 (129 aa).

This sequence belongs to the eukaryotic ribosomal protein eL32 family.

The protein is Large ribosomal subunit protein eL32 (rpl32e) of Archaeoglobus fulgidus (strain ATCC 49558 / DSM 4304 / JCM 9628 / NBRC 100126 / VC-16).